Here is a 200-residue protein sequence, read N- to C-terminus: dTDP-4-dehydrorhamnose 3,5-epimerase (200 aa).

Substrate is bound by residues arginine 21, glutamate 26, 45 to 47, and arginine 57; that span reads QVN. The active-site Proton acceptor is the histidine 60. Substrate-binding residues include lysine 70 and histidine 116. Catalysis depends on tyrosine 129, which acts as the Proton donor. Residues glutamate 140 and lysine 165 each coordinate substrate.

The protein belongs to the dTDP-4-dehydrorhamnose 3,5-epimerase family.

The enzyme catalyses dTDP-4-dehydro-6-deoxy-alpha-D-glucose = dTDP-4-dehydro-beta-L-rhamnose. It participates in carbohydrate biosynthesis; dTDP-L-rhamnose biosynthesis. The protein operates within antibiotic biosynthesis; streptomycin biosynthesis. Functionally, involved in the biosynthesis of the dihydrostreptose moiety of streptomycin. Catalyzes the epimerization of the C3' and C5'positions of dTDP-6-deoxy-D-xylo-4-hexulose, forming dTDP-6-deoxy-L-lyxo-4-hexulose. The sequence is that of dTDP-4-dehydrorhamnose 3,5-epimerase from Streptomyces griseus.